Reading from the N-terminus, the 549-residue chain is Cation/acetate symporter ActP (549 aa).

Residues 1-32 are Periplasmic-facing; it reads MKRVLTALAATLPFAANAADAISGAVERQPTN. A helical membrane pass occupies residues 33–55; the sequence is WQAIIMFLIFVVFTLGITYWASK. Residues 56 to 75 are Cytoplasmic-facing; the sequence is RVRSRNDYYTAGGNITGFQN. The helical transmembrane segment at 76 to 98 threads the bilayer; sequence GLAIAGDYMSAASFLGISALVFT. Topologically, residues 99-102 are periplasmic; that stretch reads SGYD. The helical transmembrane segment at 103–125 threads the bilayer; that stretch reads GLIYSLGFLVGWPIILFLIAERL. At 126 to 145 the chain is on the cytoplasmic side; sequence RNLGRYTFADVASYRLKQGP. A helical transmembrane segment spans residues 146–168; it reads IRILSACGSLVVVALYLIAQMVG. The Periplasmic segment spans residues 169 to 182; that stretch reads AGKLIELLFGLNYH. A helical membrane pass occupies residues 183-205; the sequence is IAVVLVGVLMMMYVLFGGMLATT. Topologically, residues 206-211 are cytoplasmic; that stretch reads WVQIIK. Residues 212 to 234 form a helical membrane-spanning segment; that stretch reads AVLLLFGASFMAFMVMKHVGFSF. At 235 to 263 the chain is on the periplasmic side; sequence NNLFSEAMAVHPKGVDIMKPGGLVKDPIS. The helical transmembrane segment at 264-286 threads the bilayer; sequence ALSLGLGLMFGTAGLPHILMHFF. The Cytoplasmic segment spans residues 287–297; it reads TVSDAREARKS. Residues 298 to 320 traverse the membrane as a helical segment; that stretch reads VFYATGFMGYFYILTFIIGFGAI. Topologically, residues 321–358 are periplasmic; it reads MLVGANPEYKDAAGHLIGGNNMAAVHLANAVGGNLFLG. The chain crosses the membrane as a helical span at residues 359–381; it reads FISAVAFATILAVVAGLTLAGAS. Over 382 to 401 the chain is Cytoplasmic; that stretch reads AVSHDLYANVFKKGATEREE. A helical membrane pass occupies residues 402–424; the sequence is LRVSKITVLILGVIAIILGVLFE. The Periplasmic portion of the chain corresponds to 425 to 427; that stretch reads NQN. The helical transmembrane segment at 428–450 threads the bilayer; sequence IAFMVGLAFAIAASCNFPIILLS. Over 451 to 461 the chain is Cytoplasmic; the sequence is MYWSKLTTRGA. The chain crosses the membrane as a helical span at residues 462–484; that stretch reads MLGGWLGLITAVVLMILGPTIWV. Residues 485 to 493 lie on the Periplasmic side of the membrane; that stretch reads QILGHEKAI. Residues 494–516 form a helical membrane-spanning segment; the sequence is FPYEYPALFSISVAFLGIWLFSA. Residues 517–549 are Cytoplasmic-facing; it reads TDNSAEGARERELFRAQFIRSQTGFGVEQGRAH.

Belongs to the sodium:solute symporter (SSF) (TC 2.A.21) family.

The protein localises to the cell inner membrane. Its function is as follows. Transports acetate. The sequence is that of Cation/acetate symporter ActP (actP) from Escherichia coli O6:H1 (strain CFT073 / ATCC 700928 / UPEC).